We begin with the raw amino-acid sequence, 866 residues long: Probable beta-glucosidase F (866 aa).

The N-terminal stretch at 1–20 (MAAFPAYLALLSYLVPGALS) is a signal peptide. Residues asparagine 65, asparagine 73, and asparagine 257 are each glycosylated (N-linked (GlcNAc...) asparagine). The active site involves aspartate 285. Residues asparagine 328, asparagine 360, asparagine 395, asparagine 421, asparagine 474, asparagine 659, asparagine 664, and asparagine 724 are each glycosylated (N-linked (GlcNAc...) asparagine). The segment at 725–748 (SSKTYPYPDGYTTEPKPAPRAGGA) is disordered.

Belongs to the glycosyl hydrolase 3 family.

It localises to the secreted. The catalysed reaction is Hydrolysis of terminal, non-reducing beta-D-glucosyl residues with release of beta-D-glucose.. It functions in the pathway glycan metabolism; cellulose degradation. Functionally, beta-glucosidases are one of a number of cellulolytic enzymes involved in the degradation of cellulosic biomass. Catalyzes the last step releasing glucose from the inhibitory cellobiose. This chain is Probable beta-glucosidase F (bglF), found in Aspergillus oryzae (strain ATCC 42149 / RIB 40) (Yellow koji mold).